We begin with the raw amino-acid sequence, 495 residues long: Calcium-dependent protein kinase 11 (495 aa).

The Protein kinase domain occupies 26 to 284; the sequence is YLLGKKLGQG…AHEALCHPWI (259 aa). Residues 32–40 and K55 each bind ATP; that span reads LGQGQFGTT. D150 serves as the catalytic Proton acceptor. S190 carries the post-translational modification Phosphoserine. The autoinhibitory domain stretch occupies residues 290 to 320; sequence APDKPLDPAVLSRLKQFSQMNKIKKMALRVI. 4 EF-hand domains span residues 327–362, 363–398, 399–434, and 438–468; these read EEIG…VGSE, LMES…MNKM, EREE…FGLC, and LDDM…GDGV. 20 residues coordinate Ca(2+): D340, D342, S344, T346, E351, D376, D378, S380, T382, E387, D412, D414, S416, Y418, E423, D446, D448, D450, K452, and E457.

The protein belongs to the protein kinase superfamily. Ser/Thr protein kinase family. CDPK subfamily. Interacts with Di19.

The protein resides in the cytoplasm. It localises to the nucleus. It catalyses the reaction L-seryl-[protein] + ATP = O-phospho-L-seryl-[protein] + ADP + H(+). The enzyme catalyses L-threonyl-[protein] + ATP = O-phospho-L-threonyl-[protein] + ADP + H(+). Its activity is regulated as follows. Activated by calcium. Autophosphorylation may play an important role in the regulation of the kinase activity. Functionally, may play a role in signal transduction pathways that involve calcium as a second messenger. Functions as a regulator of the calcium-mediated abscisic acid (ABA) signaling pathway. Phosphorylates ABA-responsive transcription factors ABF1 and ABF4 in vitro. This Arabidopsis thaliana (Mouse-ear cress) protein is Calcium-dependent protein kinase 11 (CPK11).